We begin with the raw amino-acid sequence, 246 residues long: UDP-N-acetyl-D-mannosaminuronic acid transferase (246 aa).

This sequence belongs to the glycosyltransferase 26 family.

It carries out the reaction UDP-N-acetyl-alpha-D-mannosaminouronate + N-acetyl-alpha-D-glucosaminyl-di-trans,octa-cis-undecaprenyl diphosphate = beta-D-ManNAcA-(1-&gt;4)-alpha-D-GlcNAc-di-trans,octa-cis-undecaprenyl diphosphate + UDP + H(+). Its pathway is bacterial outer membrane biogenesis; enterobacterial common antigen biosynthesis. In terms of biological role, catalyzes the synthesis of Und-PP-GlcNAc-ManNAcA (Lipid II), the second lipid-linked intermediate involved in enterobacterial common antigen (ECA) synthesis. The chain is UDP-N-acetyl-D-mannosaminuronic acid transferase from Salmonella choleraesuis (strain SC-B67).